Here is a 597-residue protein sequence, read N- to C-terminus: Cytosolic Fe-S cluster assembly factor nar1 (597 aa).

[4Fe-4S] cluster contacts are provided by Cys-20, Cys-61, Cys-64, Cys-67, Cys-209, and Cys-264. Residues 419-447 are disordered; it reads PARASRLPGARQSATSAGGSRRQLASRNA. Positions 430–447 are enriched in polar residues; sequence QSATSAGGSRRQLASRNA. Residues Cys-464 and Cys-468 each contribute to the [4Fe-4S] cluster site. The tract at residues 482 to 504 is disordered; it reads EAASNMSVESQTEPPEAALKPTP. The segment covering 485–494 has biased composition (polar residues); that stretch reads SNMSVESQTE.

It belongs to the NARF family.

In terms of biological role, component of the cytosolic Fe/S protein assembly machinery. Required for maturation of extramitochondrial Fe/S proteins. May play a role in the transfer of pre-assembled Fe/S clusters to target apoproteins. The chain is Cytosolic Fe-S cluster assembly factor nar1 (nar1) from Aspergillus clavatus (strain ATCC 1007 / CBS 513.65 / DSM 816 / NCTC 3887 / NRRL 1 / QM 1276 / 107).